A 247-amino-acid polypeptide reads, in one-letter code: Probable chemoreceptor glutamine deamidase CheD (247 aa).

Positions Lys-204 to Ala-247 are disordered.

Belongs to the CheD family.

It catalyses the reaction L-glutaminyl-[protein] + H2O = L-glutamyl-[protein] + NH4(+). Its function is as follows. Probably deamidates glutamine residues to glutamate on methyl-accepting chemotaxis receptors (MCPs), playing an important role in chemotaxis. The protein is Probable chemoreceptor glutamine deamidase CheD of Burkholderia orbicola (strain MC0-3).